The sequence spans 279 residues: 4-hydroxy-3-methylbut-2-enyl diphosphate reductase (279 aa).

C12 contacts [4Fe-4S] cluster. (2E)-4-hydroxy-3-methylbut-2-enyl diphosphate is bound by residues H36 and H70. Dimethylallyl diphosphate is bound by residues H36 and H70. Residues H36 and H70 each contribute to the isopentenyl diphosphate site. C92 serves as a coordination point for [4Fe-4S] cluster. Position 120 (H120) interacts with (2E)-4-hydroxy-3-methylbut-2-enyl diphosphate. H120 contributes to the dimethylallyl diphosphate binding site. H120 contacts isopentenyl diphosphate. Catalysis depends on E122, which acts as the Proton donor. Residue T158 coordinates (2E)-4-hydroxy-3-methylbut-2-enyl diphosphate. C186 is a binding site for [4Fe-4S] cluster. S214, S215, N216, and S258 together coordinate (2E)-4-hydroxy-3-methylbut-2-enyl diphosphate. Dimethylallyl diphosphate is bound by residues S214, S215, N216, and S258. The isopentenyl diphosphate site is built by S214, S215, N216, and S258.

This sequence belongs to the IspH family. Requires [4Fe-4S] cluster as cofactor.

The catalysed reaction is isopentenyl diphosphate + 2 oxidized [2Fe-2S]-[ferredoxin] + H2O = (2E)-4-hydroxy-3-methylbut-2-enyl diphosphate + 2 reduced [2Fe-2S]-[ferredoxin] + 2 H(+). It catalyses the reaction dimethylallyl diphosphate + 2 oxidized [2Fe-2S]-[ferredoxin] + H2O = (2E)-4-hydroxy-3-methylbut-2-enyl diphosphate + 2 reduced [2Fe-2S]-[ferredoxin] + 2 H(+). It functions in the pathway isoprenoid biosynthesis; dimethylallyl diphosphate biosynthesis; dimethylallyl diphosphate from (2E)-4-hydroxy-3-methylbutenyl diphosphate: step 1/1. It participates in isoprenoid biosynthesis; isopentenyl diphosphate biosynthesis via DXP pathway; isopentenyl diphosphate from 1-deoxy-D-xylulose 5-phosphate: step 6/6. Catalyzes the conversion of 1-hydroxy-2-methyl-2-(E)-butenyl 4-diphosphate (HMBPP) into a mixture of isopentenyl diphosphate (IPP) and dimethylallyl diphosphate (DMAPP). Acts in the terminal step of the DOXP/MEP pathway for isoprenoid precursor biosynthesis. This chain is 4-hydroxy-3-methylbut-2-enyl diphosphate reductase, found in Campylobacter fetus subsp. fetus (strain 82-40).